Reading from the N-terminus, the 263-residue chain is MANTNYINRDETVFNDAQSLMQLNKNILLKGPTGSGKTKLAETLSETMNRPMHQINCSVDLDAESLLGFKTIQTNENGSQEIVFIDGPVIKAMKEGHILYIDEINMAKPETLPILNGVLDYRRKLTNPFTGEVVNAAPGFNVIAAINVGYIGTLPMNEALKNRFVVIQVDYIDGDILSDVIKQQSQLSDDIMIQKIIKFNEDLRTMTKQGQISEEAASIRALIDLSDLATIMPIERAIQRTIIDKLEDEREQQAILNAVELNF.

31–38 (GPTGSGKT) is a binding site for ATP.

This sequence belongs to the CbbQ/NirQ/NorQ/GpvN family.

This is an uncharacterized protein from Staphylococcus saprophyticus subsp. saprophyticus (strain ATCC 15305 / DSM 20229 / NCIMB 8711 / NCTC 7292 / S-41).